A 96-amino-acid chain; its full sequence is Large ribosomal subunit protein eL43 (96 aa).

Zn(2+)-binding residues include Cys-41, Cys-44, Cys-59, and Cys-62. The C4-type zinc-finger motif lies at 41–62 (CPVCAFPKLKRAGTSIWVCEKC).

The protein belongs to the eukaryotic ribosomal protein eL43 family. Putative zinc-binding subfamily. As to quaternary structure, part of the 50S ribosomal subunit. It depends on Zn(2+) as a cofactor.

Its function is as follows. Binds to the 23S rRNA. In Methanococcus maripaludis (strain DSM 14266 / JCM 13030 / NBRC 101832 / S2 / LL), this protein is Large ribosomal subunit protein eL43.